We begin with the raw amino-acid sequence, 318 residues long: Thymidylate synthase (318 aa).

DUMP contacts are provided by residues arginine 25 and 180–181 (RR). Residue cysteine 200 is the Nucleophile of the active site. DUMP contacts are provided by residues 220–223 (RSGD), asparagine 231, and 261–263 (HIY). Residue aspartate 223 participates in (6R)-5,10-methylene-5,6,7,8-tetrahydrofolate binding. Alanine 317 lines the (6R)-5,10-methylene-5,6,7,8-tetrahydrofolate pocket.

It belongs to the thymidylate synthase family. Bacterial-type ThyA subfamily. As to quaternary structure, homodimer.

Its subcellular location is the cytoplasm. The enzyme catalyses dUMP + (6R)-5,10-methylene-5,6,7,8-tetrahydrofolate = 7,8-dihydrofolate + dTMP. The protein operates within pyrimidine metabolism; dTTP biosynthesis. In terms of biological role, catalyzes the reductive methylation of 2'-deoxyuridine-5'-monophosphate (dUMP) to 2'-deoxythymidine-5'-monophosphate (dTMP) while utilizing 5,10-methylenetetrahydrofolate (mTHF) as the methyl donor and reductant in the reaction, yielding dihydrofolate (DHF) as a by-product. This enzymatic reaction provides an intracellular de novo source of dTMP, an essential precursor for DNA biosynthesis. This chain is Thymidylate synthase, found in Bacillus thuringiensis subsp. konkukian (strain 97-27).